A 59-amino-acid chain; its full sequence is Putative potassium channel toxin Ts22 (59 aa).

The first 22 residues, 1-22 (MKAFYGILIIFILISMIDLSQQ), serve as a signal peptide directing secretion. Cystine bridges form between C29–C50, C35–C55, and C39–C57.

The protein belongs to the short scorpion toxin superfamily. Potassium channel inhibitor family. Alpha-KTx 04 subfamily. In terms of tissue distribution, expressed by the venom gland.

Its subcellular location is the secreted. Functionally, potently blocks voltage-gated potassium channels (Kv). This is Putative potassium channel toxin Ts22 from Tityus serrulatus (Brazilian scorpion).